Reading from the N-terminus, the 199-residue chain is Cytochrome c-type cyt cy (199 aa).

A helical transmembrane segment spans residues 7–27 (ITKIGVTLFAVALFYGFIYML). The span at 69-80 (AAETAEAAAPAE) shows a compositional bias: low complexity. Positions 69-93 (AAETAEAAAPAEPAAPPPPAYVEVD) are disordered. Residues Cys-112, Cys-115, His-116, and Met-148 each coordinate heme c.

Post-translationally, binds 1 heme c group covalently per subunit.

The protein resides in the cell membrane. Its function is as follows. Electron transfer pathways that operates during photosynthesis. In Rhodobacter capsulatus (strain ATCC BAA-309 / NBRC 16581 / SB1003), this protein is Cytochrome c-type cyt cy (cycY).